The following is a 212-amino-acid chain: ATP-dependent dethiobiotin synthetase BioD (212 aa).

An ATP-binding site is contributed by 13 to 18 (GIGKTV). Thr-17 contacts Mg(2+). Residue Lys-33 is part of the active site. Ser-37 provides a ligand contact to substrate. Mg(2+) is bound at residue Glu-100. Residues 100–103 (EGAG) and 184–186 (PLL) each bind ATP.

It belongs to the dethiobiotin synthetase family. As to quaternary structure, homodimer. Requires Mg(2+) as cofactor.

The protein resides in the cytoplasm. The catalysed reaction is (7R,8S)-7,8-diammoniononanoate + CO2 + ATP = (4R,5S)-dethiobiotin + ADP + phosphate + 3 H(+). Its pathway is cofactor biosynthesis; biotin biosynthesis; biotin from 7,8-diaminononanoate: step 1/2. Functionally, catalyzes a mechanistically unusual reaction, the ATP-dependent insertion of CO2 between the N7 and N8 nitrogen atoms of 7,8-diaminopelargonic acid (DAPA, also called 7,8-diammoniononanoate) to form a ureido ring. The chain is ATP-dependent dethiobiotin synthetase BioD from Brucella canis (strain ATCC 23365 / NCTC 10854 / RM-666).